The sequence spans 279 residues: HTH-type transcriptional activator RhaS (279 aa).

One can recognise an HTH araC/xylS-type domain in the interval 175 to 273 (QALLGWLQNN…SQAPKSLRHQ (99 aa)). DNA-binding regions (H-T-H motif) lie at residues 192 to 213 (GSLA…KQHT) and 240 to 263 (ITTI…RKAF).

In terms of assembly, binds DNA as a dimer.

The protein resides in the cytoplasm. Functionally, activates expression of the rhaBAD and rhaT operons. This is HTH-type transcriptional activator RhaS from Pectobacterium carotovorum subsp. carotovorum (strain PC1).